The chain runs to 206 residues: Thymidylate kinase (206 aa).

Residue 7–14 coordinates ATP; sequence GGEGVGKT.

This sequence belongs to the thymidylate kinase family.

The catalysed reaction is dTMP + ATP = dTDP + ADP. Its function is as follows. Phosphorylation of dTMP to form dTDP in both de novo and salvage pathways of dTTP synthesis. This chain is Thymidylate kinase, found in Synechococcus sp. (strain JA-2-3B'a(2-13)) (Cyanobacteria bacterium Yellowstone B-Prime).